The following is a 122-amino-acid chain: Large ribosomal subunit protein uL14 (122 aa).

It belongs to the universal ribosomal protein uL14 family. As to quaternary structure, part of the 50S ribosomal subunit. Forms a cluster with proteins L3 and L19. In the 70S ribosome, L14 and L19 interact and together make contacts with the 16S rRNA in bridges B5 and B8.

In terms of biological role, binds to 23S rRNA. Forms part of two intersubunit bridges in the 70S ribosome. This Treponema denticola (strain ATCC 35405 / DSM 14222 / CIP 103919 / JCM 8153 / KCTC 15104) protein is Large ribosomal subunit protein uL14.